Here is a 301-residue protein sequence, read N- to C-terminus: Homoserine O-acetyltransferase (301 aa).

The Acyl-thioester intermediate role is filled by C142. 2 residues coordinate substrate: K163 and S192. The active-site Proton acceptor is the H235. E237 is a catalytic residue. A substrate-binding site is contributed by R249.

It belongs to the MetA family.

The protein localises to the cytoplasm. It catalyses the reaction L-homoserine + acetyl-CoA = O-acetyl-L-homoserine + CoA. It functions in the pathway amino-acid biosynthesis; L-methionine biosynthesis via de novo pathway; O-acetyl-L-homoserine from L-homoserine: step 1/1. Transfers an acetyl group from acetyl-CoA to L-homoserine, forming acetyl-L-homoserine. In Bacillus cereus (strain AH187), this protein is Homoserine O-acetyltransferase.